We begin with the raw amino-acid sequence, 369 residues long: Aminomethyltransferase (369 aa).

It belongs to the GcvT family. As to quaternary structure, the glycine cleavage system is composed of four proteins: P, T, L and H.

The enzyme catalyses N(6)-[(R)-S(8)-aminomethyldihydrolipoyl]-L-lysyl-[protein] + (6S)-5,6,7,8-tetrahydrofolate = N(6)-[(R)-dihydrolipoyl]-L-lysyl-[protein] + (6R)-5,10-methylene-5,6,7,8-tetrahydrofolate + NH4(+). The glycine cleavage system catalyzes the degradation of glycine. This is Aminomethyltransferase from Xanthomonas euvesicatoria pv. vesicatoria (strain 85-10) (Xanthomonas campestris pv. vesicatoria).